Here is a 158-residue protein sequence, read N- to C-terminus: Cyclic pyranopterin monophosphate synthase (158 aa).

Substrate is bound by residues 75–77 and 113–114; these read LCH and ME. Asp128 is an active-site residue.

The protein belongs to the MoaC family. Homohexamer; trimer of dimers.

It carries out the reaction (8S)-3',8-cyclo-7,8-dihydroguanosine 5'-triphosphate = cyclic pyranopterin phosphate + diphosphate. It participates in cofactor biosynthesis; molybdopterin biosynthesis. Its function is as follows. Catalyzes the conversion of (8S)-3',8-cyclo-7,8-dihydroguanosine 5'-triphosphate to cyclic pyranopterin monophosphate (cPMP). This is Cyclic pyranopterin monophosphate synthase from Actinobacillus succinogenes (strain ATCC 55618 / DSM 22257 / CCUG 43843 / 130Z).